The sequence spans 208 residues: Uracil phosphoribosyltransferase (208 aa).

5-phospho-alpha-D-ribose 1-diphosphate is bound by residues R78, R103, and 130–138 (DPMLATGGS). Residues I193 and 198–200 (GDA) each bind uracil. Residue D199 participates in 5-phospho-alpha-D-ribose 1-diphosphate binding.

Belongs to the UPRTase family. It depends on Mg(2+) as a cofactor.

The enzyme catalyses UMP + diphosphate = 5-phospho-alpha-D-ribose 1-diphosphate + uracil. The protein operates within pyrimidine metabolism; UMP biosynthesis via salvage pathway; UMP from uracil: step 1/1. With respect to regulation, allosterically activated by GTP. In terms of biological role, catalyzes the conversion of uracil and 5-phospho-alpha-D-ribose 1-diphosphate (PRPP) to UMP and diphosphate. The sequence is that of Uracil phosphoribosyltransferase from Aliivibrio fischeri (strain MJ11) (Vibrio fischeri).